The following is a 647-amino-acid chain: Threonine--tRNA ligase (647 aa).

The region spanning 1–61 is the TGS domain; the sequence is MINITFPDGA…TEDGSIEIVT (61 aa). The segment at 242–540 is catalytic; the sequence is DHRKLGKELD…LIENYKGAFP (299 aa). Zn(2+) contacts are provided by Cys336, His387, and His517.

The protein belongs to the class-II aminoacyl-tRNA synthetase family. In terms of assembly, homodimer. The cofactor is Zn(2+).

The protein resides in the cytoplasm. The catalysed reaction is tRNA(Thr) + L-threonine + ATP = L-threonyl-tRNA(Thr) + AMP + diphosphate + H(+). Functionally, catalyzes the attachment of threonine to tRNA(Thr) in a two-step reaction: L-threonine is first activated by ATP to form Thr-AMP and then transferred to the acceptor end of tRNA(Thr). Also edits incorrectly charged L-seryl-tRNA(Thr). The sequence is that of Threonine--tRNA ligase from Streptococcus pneumoniae (strain ATCC 700669 / Spain 23F-1).